The sequence spans 322 residues: Acetylglutamate kinase (322 aa).

Substrate-binding positions include 85–86 (GG), arginine 107, and asparagine 211.

The protein belongs to the acetylglutamate kinase family. ArgB subfamily.

It localises to the cytoplasm. The catalysed reaction is N-acetyl-L-glutamate + ATP = N-acetyl-L-glutamyl 5-phosphate + ADP. It functions in the pathway amino-acid biosynthesis; L-arginine biosynthesis; N(2)-acetyl-L-ornithine from L-glutamate: step 2/4. Catalyzes the ATP-dependent phosphorylation of N-acetyl-L-glutamate. The sequence is that of Acetylglutamate kinase from Methanosarcina barkeri (strain Fusaro / DSM 804).